The sequence spans 1481 residues: Cystic fibrosis transmembrane conductance regulator (1481 aa).

Residues M1 to F77 lie on the Cytoplasmic side of the membrane. The helical transmembrane segment at F78 to Q98 threads the bilayer. In terms of domain architecture, ABC transmembrane type-1 1 spans F81–L365. Topologically, residues P99–Y122 are extracellular. Residues L123–H146 form a helical membrane-spanning segment. Residues H147–L195 lie on the Cytoplasmic side of the membrane. The chain crosses the membrane as a helical span at residues A196–W216. Residues E217–S222 lie on the Extracellular side of the membrane. A helical transmembrane segment spans residues A223–M243. The Cytoplasmic portion of the chain corresponds to M244–K298. A helical membrane pass occupies residues A299–F319. The Extracellular portion of the chain corresponds to L320 to T339. A helical membrane pass occupies residues I340 to V358. Topologically, residues Q359 to S858 are cytoplasmic. Residues W401, S434, G458–T465, and Q493 contribute to the ATP site. In terms of domain architecture, ABC transporter 1 spans N423 to G646. C524 carries the S-palmitoyl cysteine lipid modification. Phosphoserine occurs at positions 549 and 660. A disordered R region region spans residues S654–E831. S670 carries the post-translational modification Phosphoserine; by PKA. S686 carries the phosphoserine modification. K688 participates in a covalent cross-link: Glycyl lysine isopeptide (Lys-Gly) (interchain with G-Cter in ubiquitin). S700 and S712 each carry phosphoserine. T717 is modified (phosphothreonine). A phosphoserine mark is found at S737, S753, S768, S790, S795, and S813. Residues L859–V879 form a helical membrane-spanning segment. The 297-residue stretch at L859 to S1155 folds into the ABC transmembrane type-1 2 domain. Topologically, residues V880–I918 are extracellular. N-linked (GlcNAc...) asparagine glycans are attached at residues N894, N900, and N909. The chain crosses the membrane as a discontinuously helical span at residues Y919–H939. The Cytoplasmic segment spans residues T940 to T990. Residues I991 to L1011 form a helical membrane-spanning segment. The Extracellular segment spans residues Q1012 to P1013. A helical transmembrane segment spans residues Y1014–L1034. Residues Q1035–T1095 are Cytoplasmic-facing. The helical transmembrane segment at L1096–F1116 threads the bilayer. The Extracellular segment spans residues I1117–G1130. A helical membrane pass occupies residues I1131 to I1151. The Cytoplasmic segment spans residues D1152–L1481. In terms of domain architecture, ABC transporter 2 spans M1211 to H1444. ATP-binding positions include Y1220 and G1245 to S1252. The tract at residues R1387–L1481 is interaction with GORASP2. C1396 carries the S-palmitoyl cysteine lipid modification. Residues S1445 and S1457 each carry the phosphoserine modification. Residues H1453 to L1481 are disordered. The segment covering E1471–L1481 has biased composition (acidic residues). A PDZ-binding motif is present at residues T1479 to L1481.

Belongs to the ABC transporter superfamily. ABCC family. CFTR transporter (TC 3.A.1.202) subfamily. Monomer; does not require oligomerization for channel activity. May form oligomers in the membrane. Interacts with SLC26A3, SLC26A6 and NHERF1. Interacts with SHANK2. Interacts with MYO6. Interacts (via C-terminus) with GOPC (via PDZ domain); this promotes CFTR internalization and thereby decreases channel activity. Interacts with SLC4A7 through NHERF1. Found in a complex with MYO5B and RAB11A. Interacts with ANO1. Interacts with SLC26A8. Interacts with AHCYL1; the interaction increases CFTR activity. Interacts with CSE1L. The core-glycosylated form interacts with GORASP2 (via PDZ GRASP-type 1 domain) in respone to ER stress. Interacts with MARCHF2; the interaction leads to CFTR ubiqtuitination and degradation. Interacts with ADGRG2. In terms of processing, N-glycosylated. Post-translationally, phosphorylated; cAMP treatment promotes phosphorylation and activates the channel. Dephosphorylation decreases the ATPase activity (in vitro). Phosphorylation at PKA sites activates the channel. Phosphorylation at PKC sites enhances the response to phosphorylation by PKA. Phosphorylated by AMPK; this inhibits channel activity. Ubiquitinated, leading to its degradation in the lysosome. Deubiquitination by USP10 in early endosomes enhances its endocytic recycling to the cell membrane. Ubiquitinated by RNF185 during ER stress. Ubiquitinated by MARCHF2.

The protein localises to the apical cell membrane. Its subcellular location is the early endosome membrane. It localises to the cell membrane. The protein resides in the recycling endosome membrane. It is found in the endoplasmic reticulum membrane. The protein localises to the nucleus. It catalyses the reaction ATP + H2O + closed Cl(-) channel = ADP + phosphate + open Cl(-) channel.. The enzyme catalyses chloride(in) = chloride(out). It carries out the reaction hydrogencarbonate(in) = hydrogencarbonate(out). The catalysed reaction is ATP + H2O = ADP + phosphate + H(+). Its function is as follows. Epithelial ion channel that plays an important role in the regulation of epithelial ion and water transport and fluid homeostasis. Mediates the transport of chloride ions across the cell membrane. Possesses an intrinsic ATPase activity and utilizes ATP to gate its channel; the passive flow of anions through the channel is gated by cycles of ATP binding and hydrolysis by the ATP-binding domains. The ion channel is also permeable to HCO(3)(-); selectivity depends on the extracellular chloride concentration. Exerts its function also by modulating the activity of other ion channels and transporters. Contributes to the regulation of the pH and the ion content of the epithelial fluid layer. Modulates the activity of the epithelial sodium channel (ENaC) complex, in part by regulating the cell surface expression of the ENaC complex. May regulate bicarbonate secretion and salvage in epithelial cells by regulating the transporter SLC4A7. Can inhibit the chloride channel activity of ANO1. Plays a role in the chloride and bicarbonate homeostasis during sperm epididymal maturation and capacitation. The chain is Cystic fibrosis transmembrane conductance regulator from Callithrix jacchus (White-tufted-ear marmoset).